A 266-amino-acid chain; its full sequence is Glutamate racemase (266 aa).

Substrate is bound by residues 9–10 (DS) and 41–42 (YG). The active-site Proton donor/acceptor is C72. 73 to 74 (NT) lines the substrate pocket. C183 (proton donor/acceptor) is an active-site residue. Substrate is bound at residue 184–185 (TH).

The protein belongs to the aspartate/glutamate racemases family.

The enzyme catalyses L-glutamate = D-glutamate. It functions in the pathway cell wall biogenesis; peptidoglycan biosynthesis. Functionally, provides the (R)-glutamate required for cell wall biosynthesis. The chain is Glutamate racemase from Listeria monocytogenes serotype 4b (strain CLIP80459).